A 250-amino-acid polypeptide reads, in one-letter code: Ribose-5-phosphate isomerase A (250 aa).

Residues Thr-33–Thr-36, Asp-89–Asp-92, and Lys-102–Gly-105 each bind substrate. Glu-111 serves as the catalytic Proton acceptor. Substrate is bound at residue Lys-129.

This sequence belongs to the ribose 5-phosphate isomerase family. As to quaternary structure, homodimer.

It catalyses the reaction aldehydo-D-ribose 5-phosphate = D-ribulose 5-phosphate. Its pathway is carbohydrate degradation; pentose phosphate pathway; D-ribose 5-phosphate from D-ribulose 5-phosphate (non-oxidative stage): step 1/1. In terms of biological role, catalyzes the reversible conversion of ribose-5-phosphate to ribulose 5-phosphate. The chain is Ribose-5-phosphate isomerase A from Cereibacter sphaeroides (strain ATCC 17025 / ATH 2.4.3) (Rhodobacter sphaeroides).